A 309-amino-acid chain; its full sequence is Taste receptor type 2 member 46 (309 aa).

Position 1 (M1) is a topological domain, extracellular. A helical membrane pass occupies residues 2–22; the sequence is ITFLPIIFSILIVVTFVIGNF. Over 23–46 the chain is Cytoplasmic; sequence ANGFIALVNSIEWFKRQKISFADQ. The helical transmembrane segment at 47-67 threads the bilayer; it reads ILTALAVSRVGLLWVLVLNWY. Over 68–86 the chain is Extracellular; that stretch reads ATELNPAFNSIEVRITAYN. Residues 87-107 form a helical membrane-spanning segment; it reads VWAVINHFSNWLATSLSIFYL. The Cytoplasmic segment spans residues 108-126; the sequence is LKIANFSNLIFLHLKRRVK. A helical membrane pass occupies residues 127–147; sequence SVVLVILLGPLLFLVCHLFVI. Topologically, residues 148 to 178 are extracellular; the sequence is NMNQIIWTKEYEGNMTWKIKLRSAMYLSNTT. N161 and N176 each carry an N-linked (GlcNAc...) asparagine glycan. Residues 179-199 form a helical membrane-spanning segment; it reads VTILANLVPFTLTLISFLLLI. Topologically, residues 200 to 229 are cytoplasmic; it reads CSLCKHLKKMQLHGKGSQDPSMKVHIKALQ. The chain crosses the membrane as a helical span at residues 230–250; that stretch reads TVTSFLLLCAIYFLSIIMSVW. Residues 251 to 259 lie on the Extracellular side of the membrane; that stretch reads SFESLENKP. A helical membrane pass occupies residues 260–280; the sequence is VFMFCEAIAFSYPSTHPFILI. The Cytoplasmic segment spans residues 281 to 309; sequence WGNKKLKQTFLSVLWHVRYWVKGEKPSSS.

It belongs to the G-protein coupled receptor T2R family. In terms of tissue distribution, expressed in subsets of taste receptor cells of the tongue and exclusively in gustducin-positive cells. Expressed on ciliated airway epithelium.

It is found in the membrane. It localises to the cell projection. The protein resides in the cilium membrane. Functionally, receptor that may play a role in the perception of bitterness and is gustducin-linked. May play a role in sensing the chemical composition of the gastrointestinal content. The activity of this receptor may stimulate alpha gustducin, mediate PLC-beta-2 activation and lead to the gating of TRPM5. In airway epithelial cells, binding of bitter compounds increases the intracellular calcium ion concentration and stimulates ciliary beat frequency. The chain is Taste receptor type 2 member 46 (TAS2R46) from Homo sapiens (Human).